The chain runs to 474 residues: Eukaryotic translation initiation factor 3 subunit L (474 aa).

The 195-residue stretch at 255–449 (DAIRMFSHIL…DLDYALQGDL (195 aa)) folds into the PCI domain.

It belongs to the eIF-3 subunit L family. In terms of assembly, component of the eukaryotic translation initiation factor 3 (eIF-3) complex.

The protein localises to the cytoplasm. Component of the eukaryotic translation initiation factor 3 (eIF-3) complex, which is involved in protein synthesis of a specialized repertoire of mRNAs and, together with other initiation factors, stimulates binding of mRNA and methionyl-tRNAi to the 40S ribosome. The eIF-3 complex specifically targets and initiates translation of a subset of mRNAs involved in cell proliferation. The protein is Eukaryotic translation initiation factor 3 subunit L of Neurospora crassa (strain ATCC 24698 / 74-OR23-1A / CBS 708.71 / DSM 1257 / FGSC 987).